A 448-amino-acid chain; its full sequence is Tumor necrosis factor receptor superfamily member EDAR (448 aa).

A signal peptide spans 1 to 26 (MAHVGDCKWMSWLPVLVVSLMCSAKA). Residues 27-187 (EDSNCGENEY…LSGQGHLATA (161 aa)) lie on the Extracellular side of the membrane. TNFR-Cys repeat units follow at residues 30 to 71 (NCGE…DYGC), 73 to 113 (PCPA…DAEC), and 115 to 150 (PCLPGYYMLENRPRNIYGMVCYSCLLAPPNTKECVG). 6 disulfides stabilise this stretch: Cys31–Cys44, Cys47–Cys60, Cys50–Cys71, Cys74–Cys87, Cys93–Cys113, and Cys135–Cys148. An N-linked (GlcNAc...) asparagine glycan is attached at Asn38. Residues 188–208 (LIIAMSTIFIMAIAIVLIIMF) form a helical membrane-spanning segment. At 209–448 (YIMKTKPSAP…PPASPPPAAS (240 aa)) the chain is on the cytoplasmic side. Residues 220-229 (CCSSPPGKSA) are compositionally biased toward low complexity. Residues 220–297 (CCSSPPGKSA…EEPAPDKQGS (78 aa)) are disordered. Polar residues predominate over residues 258–283 (LTATPTKTPKSENDASSENEQLLSRS). One can recognise a Death domain in the interval 358 to 431 (RMLSSTYNSE…DAVESLCADI (74 aa)).

As to quaternary structure, binds to EDARADD. Associates with TRAF1, TRAF2, TRAF3 and NIK.

The protein resides in the membrane. Receptor for EDA isoform TAA, but not for EDA isoform TA-2. May mediate the activation of NF-kappa-B and JNK. May promote caspase-independent cell death. In Mus musculus (Mouse), this protein is Tumor necrosis factor receptor superfamily member EDAR (Edar).